Here is a 369-residue protein sequence, read N- to C-terminus: Core histone macro-H2A.1 (369 aa).

N6-lactoyllysine; alternate occurs at positions 7 and 9. The 76-residue stretch at 15 to 90 (RSAKAGVIFP…ILLAVANDEE (76 aa)) folds into the Histone H2A domain. An N6-methyllysine modification is found at lysine 18. N6-acetyllysine; alternate is present on lysine 116. A Glycyl lysine isopeptide (Lys-Gly) (interchain with G-Cter in ubiquitin); alternate cross-link involves residue lysine 116. Lysine 117 is covalently cross-linked (Glycyl lysine isopeptide (Lys-Gly) (interchain with G-Cter in ubiquitin)). Position 123 is an N6-acetyllysine; alternate (lysine 123). At lysine 123 the chain carries N6,N6-dimethyllysine; alternate. Lysine 123 is covalently cross-linked (Glycyl lysine isopeptide (Lys-Gly) (interchain with G-Cter in SUMO2); alternate). The interval 128 to 180 (ITPPPAKKAKSPSQKKTVSKKTGGKKGARKSKKKQGEVSKSASADSTTEGTPA) is disordered. Threonine 129 carries the phosphothreonine modification. Residues 144–160 (TVSKKTGGKKGARKSKK) are compositionally biased toward basic residues. A compositionally biased stretch (polar residues) spans 165 to 177 (VSKSASADSTTEG). Residue lysine 167 forms a Glycyl lysine isopeptide (Lys-Gly) (interchain with G-Cter in SUMO2) linkage. Phosphoserine is present on residues serine 170 and serine 173. A Phosphothreonine modification is found at threonine 178. The 184-residue stretch at 184–367 (TVLSTKSLFL…IYVQEMAKLD (184 aa)) folds into the Macro domain. Residue lysine 189 forms a Glycyl lysine isopeptide (Lys-Gly) (interchain with G-Cter in SUMO2) linkage. A glycoprotein-binding residues include aspartate 203, isoleucine 204, valine 226, serine 275, glycine 312, serine 313, glycine 314, and asparagine 316. Lysine 320 is covalently cross-linked (Glycyl lysine isopeptide (Lys-Gly) (interchain with G-Cter in SUMO2)).

Belongs to the histone H2A family. As to quaternary structure, the nucleosome is a histone octamer containing two molecules each of H2A, H2B, H3 and H4 assembled in one H3-H4 heterotetramer and two H2A-H2B heterodimers. In terms of processing, ADP-ribosylated. Monoubiquitinated at either Lys-116 or Lys-117. May also be polyubiquitinated. Ubiquitination is mediated by the CUL3/SPOP E3 complex and does not promote proteasomal degradation. Instead, it is required for enrichment in inactive X chromosome chromatin. As to expression, present in liver (at protein level).

It is found in the nucleus. Its subcellular location is the chromosome. Its function is as follows. Variant histone H2A which replaces conventional H2A in a subset of nucleosomes where it represses transcription. Nucleosomes wrap and compact DNA into chromatin, limiting DNA accessibility to the cellular machineries which require DNA as a template. Histones thereby play a central role in transcription regulation, DNA repair, DNA replication and chromosomal stability. DNA accessibility is regulated via a complex set of post-translational modifications of histones, also called histone code, and nucleosome remodeling. Functionally, isoform that specifically binds poly-ADP-ribose and O-acetyl-ADP-ribose and plays a key role in NAD(+) metabolism. Able to bind to the ends of poly-ADP-ribose chains created by PARP1 and cap them. This prevents PARP1 from further addition of ADP-ribose and thus limits the consumption of nuclear NAD(+), allowing the cell to maintain proper NAD(+) levels in both the nucleus and the mitochondria to promote proper mitochondrial respiration. In contrast to isoform 1, does not bind poly-ADP-ribose. This is Core histone macro-H2A.1 from Gallus gallus (Chicken).